A 287-amino-acid polypeptide reads, in one-letter code: Merozoite surface protein 2 (287 aa).

A signal peptide spans 1-20 (MKVIKTLSIINFFIFVTFNI). Asparagine 22 and asparagine 36 each carry an N-linked (GlcNAc...) asparagine glycan. Positions 42–248 (SMTESNPPTG…DSQKECTDGN (207 aa)) are disordered. The segment at 44–213 (TESNPPTGAS…EQTESPELQS (170 aa)) is polymorphic region. A compositionally biased stretch (gly residues) spans 54–112 (GSAGGSAGGSAGGSAGGSAGGSAGGSAGGSAGGSAGGSAGGSAGGSAGGSAGSGDGNGA). 12 consecutive repeat copies span residues 55 to 58 (SAGG), 59 to 62 (SAGG), 63 to 66 (SAGG), 67 to 70 (SAGG), 71 to 74 (SAGG), 75 to 78 (SAGG), 79 to 82 (SAGG), 83 to 86 (SAGG), 87 to 90 (SAGG), 91 to 94 (SAGG), 95 to 98 (SAGG), and 99 to 102 (SAGG). The interval 55-102 (SAGGSAGGSAGGSAGGSAGGSAGGSAGGSAGGSAGGSAGGSAGGSAGG) is 12 X 4 AA tandem repeats of S-A-G-G. Residues 121–149 (SPSTPATTTTTTTTNDAEASTSTSSENPN) show a composition bias toward low complexity. 2 stretches are compositionally biased toward polar residues: residues 150–180 (HNNA…NVPP) and 187–215 (KSPT…QSAP). N-linked (GlcNAc...) asparagine glycosylation is present at asparagine 164. Residue asparagine 236 is glycosylated (N-linked (GlcNAc...) asparagine). Cysteine 244 and cysteine 252 form a disulfide bridge. Asparagine 260 and asparagine 261 each carry an N-linked (GlcNAc...) asparagine glycan. Asparagine 261 carries the GPI-anchor amidated asparagine lipid modification. Positions 262–287 (SSNIASINKFVVLISATLVLSFAIFI) are cleaved as a propeptide — removed in mature form.

The protein resides in the cell membrane. Its function is as follows. May play a role in the merozoite attachment to the erythrocyte. This is Merozoite surface protein 2 from Plasmodium falciparum (isolate FCR-3 / Gambia).